The following is a 212-amino-acid chain: Small ribosomal subunit protein uS2 (212 aa).

The interval 190–212 (LSPDAPEDQPAPVSEFETKVKMV) is disordered.

The protein belongs to the universal ribosomal protein uS2 family.

The chain is Small ribosomal subunit protein uS2 from Ignicoccus hospitalis (strain KIN4/I / DSM 18386 / JCM 14125).